The sequence spans 271 residues: MPELPEVEVTRLSFAERIAGARIEAVLVGKPLRWPLGCETQQLQGQRVLAVRRRGKYLLLDLSEGLLLMHLGMSGSVSFGLNLPVTGKHDHFDMVTSLGTLRLHDPRRFGAVVYASGEDDAVAKKLLGRLGVEPLSDAFDALVFHQWLKGRKTAIKPLLLAGQAVVGVGNIYASEALFLAGIRPTTKASLISKPRAARLHRAIQDVLTNAVAKGGSTLRDFSNADGEAGHFQLDAMVYDRAGLPCRVCAAPIKSIRQGQRSSFYCATCQKP.

Catalysis depends on proline 2, which acts as the Schiff-base intermediate with DNA. Residue glutamate 3 is the Proton donor of the active site. Lysine 56 serves as the catalytic Proton donor; for beta-elimination activity. DNA is bound by residues histidine 89, arginine 107, and arginine 151. The FPG-type zinc finger occupies 236 to 270 (MVYDRAGLPCRVCAAPIKSIRQGQRSSFYCATCQK). Arginine 260 serves as the catalytic Proton donor; for delta-elimination activity.

It belongs to the FPG family. As to quaternary structure, monomer. Zn(2+) serves as cofactor.

The catalysed reaction is Hydrolysis of DNA containing ring-opened 7-methylguanine residues, releasing 2,6-diamino-4-hydroxy-5-(N-methyl)formamidopyrimidine.. The enzyme catalyses 2'-deoxyribonucleotide-(2'-deoxyribose 5'-phosphate)-2'-deoxyribonucleotide-DNA = a 3'-end 2'-deoxyribonucleotide-(2,3-dehydro-2,3-deoxyribose 5'-phosphate)-DNA + a 5'-end 5'-phospho-2'-deoxyribonucleoside-DNA + H(+). Its function is as follows. Involved in base excision repair of DNA damaged by oxidation or by mutagenic agents. Acts as a DNA glycosylase that recognizes and removes damaged bases. Has a preference for oxidized purines, such as 7,8-dihydro-8-oxoguanine (8-oxoG). Has AP (apurinic/apyrimidinic) lyase activity and introduces nicks in the DNA strand. Cleaves the DNA backbone by beta-delta elimination to generate a single-strand break at the site of the removed base with both 3'- and 5'-phosphates. The sequence is that of Formamidopyrimidine-DNA glycosylase from Polaromonas naphthalenivorans (strain CJ2).